Here is a 63-residue protein sequence, read N- to C-terminus: Beta-defensin 38 (63 aa).

The N-terminal stretch at 1-21 is a signal peptide; it reads MKISCFLLLVLSLYLFQVNQA. Cystine bridges form between Cys29/Cys58, Cys36/Cys51, and Cys41/Cys59.

Belongs to the beta-defensin family.

The protein localises to the secreted. Its function is as follows. Has antibacterial activity. The chain is Beta-defensin 38 (Defb38) from Rattus norvegicus (Rat).